The sequence spans 622 residues: Low affinity potassium transport system protein Kup (622 aa).

Helical transmembrane passes span 9–29 (LPAI…TSPL), 49–69 (VFGF…IKYL), 103–123 (VIMG…TPAI), 137–157 (PQLD…LFMI), 165–185 (VGKL…GLGL), 213–233 (VSFI…ALYA), 247–267 (WFTV…ALLL), 276–296 (PFFL…AALA), 337–357 (IYIP…IVSF), 363–383 (LAAA…ILST), 396–416 (FVAL…TANL), and 419–439 (LLSG…VMTT).

It belongs to the HAK/KUP transporter (TC 2.A.72) family.

Its subcellular location is the cell inner membrane. The catalysed reaction is K(+)(in) + H(+)(in) = K(+)(out) + H(+)(out). Responsible for the low-affinity transport of potassium into the cell. Likely operates as a K(+):H(+) symporter. The chain is Low affinity potassium transport system protein Kup from Escherichia coli O157:H7 (strain EC4115 / EHEC).